The chain runs to 154 residues: D-aminoacyl-tRNA deacylase (154 aa).

A Gly-cisPro motif, important for rejection of L-amino acids motif is present at residues 138–139 (GP).

This sequence belongs to the DTD family. In terms of assembly, homodimer.

The protein localises to the cytoplasm. It catalyses the reaction glycyl-tRNA(Ala) + H2O = tRNA(Ala) + glycine + H(+). The enzyme catalyses a D-aminoacyl-tRNA + H2O = a tRNA + a D-alpha-amino acid + H(+). An aminoacyl-tRNA editing enzyme that deacylates mischarged D-aminoacyl-tRNAs. Also deacylates mischarged glycyl-tRNA(Ala), protecting cells against glycine mischarging by AlaRS. Acts via tRNA-based rather than protein-based catalysis; rejects L-amino acids rather than detecting D-amino acids in the active site. By recycling D-aminoacyl-tRNA to D-amino acids and free tRNA molecules, this enzyme counteracts the toxicity associated with the formation of D-aminoacyl-tRNA entities in vivo and helps enforce protein L-homochirality. In Halorhodospira halophila (strain DSM 244 / SL1) (Ectothiorhodospira halophila (strain DSM 244 / SL1)), this protein is D-aminoacyl-tRNA deacylase.